Consider the following 95-residue polypeptide: UPF0235 protein AnaeK_1146 (95 aa).

This sequence belongs to the UPF0235 family.

The polypeptide is UPF0235 protein AnaeK_1146 (Anaeromyxobacter sp. (strain K)).